Here is a 61-residue protein sequence, read N- to C-terminus: Small ribosomal subunit protein uS14 (61 aa).

Positions 24, 27, 40, and 43 each coordinate Zn(2+).

It belongs to the universal ribosomal protein uS14 family. Zinc-binding uS14 subfamily. As to quaternary structure, part of the 30S ribosomal subunit. Contacts proteins S3 and S10. Requires Zn(2+) as cofactor.

In terms of biological role, binds 16S rRNA, required for the assembly of 30S particles and may also be responsible for determining the conformation of the 16S rRNA at the A site. This Elusimicrobium minutum (strain Pei191) protein is Small ribosomal subunit protein uS14.